A 960-amino-acid polypeptide reads, in one-letter code: Anoctamin-1 (960 aa).

Topologically, residues 1–333 (MRVPEKYSTL…FGEKVGLYFA (333 aa)) are cytoplasmic. A disordered region spans residues 92 to 115 (TRSVRQDQPLPGKGSPVDAGSPEV). Position 196 is a phosphoserine (Ser196). The helical transmembrane segment at 334-354 (WLGAYTQMLIPASIVGVIVFL) threads the bilayer. The Extracellular segment spans residues 355-406 (YGCATVDENIPSMEMCDQRYNITMCPLCDKTCSYWKMSSACATARASHLFDN). 4 disulfides stabilise this stretch: Cys370–Cys395, Cys379–Cys836, Cys382–Cys386, and Cys625–Cys630. A helical membrane pass occupies residues 407–427 (PATVFFSVFMALWAATFMEHW). Glu425 is a Ca(2+) binding site. The Cytoplasmic segment spans residues 428–493 (KRKQMRLNYR…RDRFPAYFTN (66 aa)). Residues 494–514 (LVSIIFMIAVTFAIVLGVIIY) form a helical membrane-spanning segment. Residues 515–542 (RISTAAALAMNSSPSVRSNIRVTVTATA) lie on the Extracellular side of the membrane. Residues 543–563 (VIINLVVIILLDEVYGCIARW) form a helical membrane-spanning segment. The Cytoplasmic segment spans residues 564-581 (LTKIEVPKTEKSFEERLT). The helical transmembrane segment at 582–602 (FKAFLLKFVNSYTPIFYVAFF) threads the bilayer. Residues 603-631 (KGRFVGRPGDYVYIFRSFRMEECAPGGCL) lie on the Extracellular side of the membrane. Residues 632–652 (MELCIQLSIIMLGKQLIQNNL) form a helical membrane-spanning segment. Ca(2+) is bound by residues Asn651, Glu654, Glu702, Glu705, Glu734, and Asp738. The Cytoplasmic portion of the chain corresponds to 653 to 699 (FEIGIPKMKKFIRYLKLRRQSPSDREEYVKRKQRYEVDFNLEPFAGL). 2 helical membrane-spanning segments follow: residues 700–720 (TPEY…VASF) and 721–741 (PLAP…DAKK). Topologically, residues 742-758 (FVTELRRPVAIRAKDIG) are cytoplasmic. Residues 759-779 (IWYNILRGVGKLAVIINAFVI) traverse the membrane as a helical segment. Topologically, residues 780–866 (SFTSDFIPRL…FWAVLAARLA (87 aa)) are extracellular. N-linked (GlcNAc...) asparagine glycosylation is present at Asn806. Residues 867 to 887 (FVIVFQNLVMFMSDFVDWVIP) traverse the membrane as a helical segment. The Ca(2+) site is built by Asp883 and Asp888. At 888–960 (DIPKDISQQI…PSYEYHGDAL (73 aa)) the chain is on the cytoplasmic side. The tract at residues 928–960 (PRDVPCNNHSPTTHPEAGDGSPVPSYEYHGDAL) is disordered.

The protein belongs to the anoctamin family. As to quaternary structure, homodimer. Interacts with CFTR. Interacts with TRPV4. As to expression, expressed at the apical surface of the vomeronasal epithelium (at protein level). Expressed in the lateral and septal nasal glands (at protein level). Highly expressed in pulmonary bronchiole epithelial cells, pancreatic and submandibular gland acinar cells, kidney proximal tubule, all retinal cell layers, most sensory cells of dorsal root ganglia, Leydig cells and spermatocytes (at protein level). In the dorsal root ganglia, detected in small-diameter nociceptive neurons and in larger myelinated neurons (at protein level). In the dorsal root ganglia, expressed in MrgprA3-positive neurons (at protein level). In the developing brain, highly expressed in the ventricular zone and subventricular zone at 12.5 dpc and 14.5 dpc where it is detected in radial glial cells but not in neurons with expression dramatically decreased at P1 (at protein level). Highly expressed in the endometrial stroma (at protein level). In taste buds of the vallate papillae, expressed in the apical region of type I taste cells (at protein level). In the kidney, expressed in the collecting duct (at protein level). In the retina, strongly expressed in the outer and inner plexiform layers, weakly expressed in some somata in the inner nuclear layer and ganglion cell layer and not expressed in the outer nuclear layer (at protein level). Expressed in various retinal neurons including rod bipolar cells (at protein level). Expressed in eye, brain, myometrium and endometrium with higher levels in endometrium than myometrium in estrus and day 18 pregnant mice. Not detected in uterine smooth muscle cells. Expressed at high levels in the thyroid gland and gastrointestinal muscles.

It localises to the apical cell membrane. The protein resides in the presynapse. It catalyses the reaction chloride(in) = chloride(out). ATP and calmodulin are essential for its activation. Channel activity is inhibited by CFTR protein and by chloride inhibitors such as niflumic acid (NFA) and 4,4'-diisothiocyanatostilbene-2,2'-disulfonic acid (DIDS). Activated by heat with activation seen at temperatures above 44 degrees Celsius. Activated by BDNF in radial glial cells. Functionally, calcium-activated chloride channel (CaCC). Plays a role in transepithelial anion transport and smooth muscle contraction. Required for the normal functioning of the interstitial cells of Cajal (ICCs) which generate electrical pacemaker activity in gastrointestinal smooth muscles. Acts as a major contributor to basal and stimulated chloride conductance in airway epithelial cells and plays an important role in tracheal cartilage development. Required for CFTR activation by enhancing endoplasmic reticulum Ca(2+) store release and is also required for CFTR membrane expression. Required for basal and ATP-dependent mucus secretion in airways and intestine, probably by controlling exocytosis of mucus-filled granules by providing Ca(2+) to an apical signaling compartment. Contributes to airway mucus expression induced by interleukins IL3 and IL8 and by the asthma-associated protein CLCA1 and is required for expression of mucin MUC5AC. However, was shown in another study not to be required for MUC5AC expression. Plays a role in the propagation of Ca(2+) waves in Kolliker's organ in the cochlea and contributes to the refinement of auditory brainstem circuitries prior to hearing onset. In vomeronasal sensory neurons, modulates spontaneous firing patterns in the absence of stimuli as well as the firing pattern of pheromone-evoked activity. Responsible for calcium-activated chloride channel activity in type I taste cells of the vallate papillae. Acts as a heat sensor in nociceptive neurons. In dorsal root ganglion neurons, plays a role in mediating non-histaminergic Mas-related G-protein coupled receptor (MRGPR)-dependent itching, acting as a downstream effector of MRGPRs. In the developing brain, required for the Ca(2+)-dependent process extension of radial glial cells. The polypeptide is Anoctamin-1 (Ano1) (Mus musculus (Mouse)).